A 331-amino-acid polypeptide reads, in one-letter code: 6-phosphogluconolactonase (331 aa).

At Lys287 the chain carries N6-acetyllysine.

Belongs to the cycloisomerase 2 family.

It catalyses the reaction 6-phospho-D-glucono-1,5-lactone + H2O = 6-phospho-D-gluconate + H(+). It participates in carbohydrate degradation; pentose phosphate pathway; D-ribulose 5-phosphate from D-glucose 6-phosphate (oxidative stage): step 2/3. Functionally, catalyzes the hydrolysis of 6-phosphogluconolactone to 6-phosphogluconate. In Escherichia coli O157:H7, this protein is 6-phosphogluconolactonase.